Consider the following 561-residue polypeptide: Lysine--tRNA ligase (561 aa).

Mg(2+) is bound by residues E409 and E416.

This sequence belongs to the class-II aminoacyl-tRNA synthetase family. As to quaternary structure, homodimer. The cofactor is Mg(2+).

The protein localises to the cytoplasm. The enzyme catalyses tRNA(Lys) + L-lysine + ATP = L-lysyl-tRNA(Lys) + AMP + diphosphate. The sequence is that of Lysine--tRNA ligase from Nostoc sp. (strain PCC 7120 / SAG 25.82 / UTEX 2576).